A 364-amino-acid polypeptide reads, in one-letter code: Aminomethyltransferase (364 aa).

The protein belongs to the GcvT family. The glycine cleavage system is composed of four proteins: P, T, L and H.

It catalyses the reaction N(6)-[(R)-S(8)-aminomethyldihydrolipoyl]-L-lysyl-[protein] + (6S)-5,6,7,8-tetrahydrofolate = N(6)-[(R)-dihydrolipoyl]-L-lysyl-[protein] + (6R)-5,10-methylene-5,6,7,8-tetrahydrofolate + NH4(+). In terms of biological role, the glycine cleavage system catalyzes the degradation of glycine. The protein is Aminomethyltransferase of Shewanella pealeana (strain ATCC 700345 / ANG-SQ1).